The following is a 617-amino-acid chain: MDAPSTSSGAQSKLLMPGDDEADEDHQNRGDPNLQQKQKIQLNVDPDYDDDEDDDCFIDGCEASAPITRELVDGAIERRSKDRNVKMSIGVYDEYDDDDDDEEETEEDQRRRFVEGIRNIRHKQQESFDLEEHPIPVESEAMRQFINQQVNNAMMFNQDNSEFQHIEFEPIVKQKGPKIIEGYMWGGQIGTGSYGKVKECIDMYTLTRRAVKIMKYDKLRKITNGWENIRSEMSILRRMNHRNVIKLIEIFNIPAKGKVYMVFEYCIGSVQQLLDMEPARRLTIGESHAIFIELCQGLNYLHSKRVSHKDIKPGNLLVSIDFTVKICDFGVAEQINLFQRDGRCTKVNGTPKFQPPECIYGNHDFFDGYKADMWSAGVTLYNLVSGKYPFEKPVLLKLYECIGTEPLQMPTNVQLTKDLQDLLTKLLEKDFNERPTCLETMIHPWFLSTFPEDQGLGRIMERMRTGDRPLTMLSSMTALYDGITPEDELIIEDNLGIIQQILPINLTSEAVLERGSFPGFKFLEAKPGDGPDGVEGSEDSAAPLGPQRRPSSRSMPTCAPPGPAAGNAQNSTAENGAETDGVASASDPPPTAAPGAPPRRRKRNFFSCIFRSRTDSA.

Positions 1–11 are enriched in polar residues; the sequence is MDAPSTSSGAQ. A disordered region spans residues 1-59; sequence MDAPSTSSGAQSKLLMPGDDEADEDHQNRGDPNLQQKQKIQLNVDPDYDDDEDDDCFID. Acidic residues predominate over residues 46–57; the sequence is PDYDDDEDDDCF. The Protein kinase domain maps to 183 to 446; sequence YMWGGQIGTG…CLETMIHPWF (264 aa). ATP-binding positions include 189–197 and lysine 212; that span reads IGTGSYGKV. The Proton acceptor role is filled by aspartate 310. Residues 523 to 617 are disordered; sequence LEAKPGDGPD…CIFRSRTDSA (95 aa). Over residues 587–597 the composition is skewed to pro residues; the sequence is DPPPTAAPGAP.

This sequence belongs to the protein kinase superfamily. CAMK Ser/Thr protein kinase family. LKB1 subfamily. Interacts with strd-1. It depends on Mg(2+) as a cofactor. Requires Mn(2+) as cofactor. In terms of tissue distribution, expressed in the gonads, oocytes and early embryos (at protein level).

Its subcellular location is the cytoplasm. The protein resides in the cell cortex. It catalyses the reaction L-seryl-[protein] + ATP = O-phospho-L-seryl-[protein] + ADP + H(+). The catalysed reaction is L-threonyl-[protein] + ATP = O-phospho-L-threonyl-[protein] + ADP + H(+). Its function is as follows. Required for cytoplasmic partitioning and asymmetric cell division in early embryogenesis. Controls the asymmetric cell division of the Q.p neuroblast lineage. Involved in mediating cell polarization via regulation of anillin family scaffold proteins. Phosphorylates and restricts the asymmetry effectors mex-5 and mex-6 to the anterior cytoplasm of the zygote and maintains these phosphorylations until fertilization. May phosphorylate par-1. Required for strd-1 localization to the cell cortex of early embryos and may be required for strd-1 protein stabilization. May regulate the integrity of the early embryonic cortex in a strd-1-dependent manner. Phosphorylates and regulates aak-2 in response to oxidative stress and during dauer development. May also play a role in motility, behavioral response, regulation of lifespan and dauer formation through this pathway. Required to establish germline stem cell (GSC) quiescence during dauer development. Acts downstream of unc-40 in dendrite outgrowth. May play a role in cell shedding during embryogenesis, probably by phosphorylating pig-1. In Caenorhabditis elegans, this protein is Serine/threonine-protein kinase par-4 (par-4).